The primary structure comprises 49 residues: Large ribosomal subunit protein bL33 (49 aa).

It belongs to the bacterial ribosomal protein bL33 family.

The protein is Large ribosomal subunit protein bL33 of Syntrophomonas wolfei subsp. wolfei (strain DSM 2245B / Goettingen).